The chain runs to 142 residues: Cytochrome b5-related protein (142 aa).

Positions 16 to 100 (PTYRNSAPVT…IAKYKVRDAY (85 aa)) constitute a Cytochrome b5 heme-binding domain. 2 residues coordinate heme: His59 and His82.

It belongs to the cytochrome b5 family.

In terms of biological role, may play a role in muscle cell metabolism. This is Cytochrome b5-related protein (Cyt-b5-r) from Drosophila virilis (Fruit fly).